Here is a 93-residue protein sequence, read N- to C-terminus: C-C motif chemokine 17 (93 aa).

The first 23 residues, 1-23 (MMSLQMLLLAALLLGTSLQHASA), serve as a signal peptide directing secretion. Intrachain disulfides connect Cys33-Cys57 and Cys34-Cys73.

Belongs to the intercrine beta (chemokine CC) family.

It localises to the secreted. Its function is as follows. Chemokine, which displays chemotactic activity for T lymphocytes, preferentially Th2 cells, but not monocytes or granulocytes. Therefore plays an important role in a wide range of inflammatory and immunological processes. Acts by binding to CCR4 at T-cell surface. Mediates GM-CSF/CSF2-driven pain and inflammation. In the brain, required to maintain the typical, highly branched morphology of hippocampal microglia under homeostatic conditions. May be important for the appropriate adaptation of microglial morphology and synaptic plasticity to acute lipopolysaccharide (LPS)-induced neuroinflammation. Plays a role in wound healing, mainly by inducing fibroblast migration into the wound. This Rattus norvegicus (Rat) protein is C-C motif chemokine 17 (Ccl17).